A 149-amino-acid polypeptide reads, in one-letter code: Small ribosomal subunit protein uS9 (149 aa).

The protein belongs to the universal ribosomal protein uS9 family.

Its subcellular location is the cytoplasm. The polypeptide is Small ribosomal subunit protein uS9 (RPS16A) (Oryza sativa subsp. indica (Rice)).